The following is a 272-amino-acid chain: D-aminoacyl-tRNA deacylase (272 aa).

It belongs to the DtdA deacylase family. Monomer. Zn(2+) serves as cofactor.

The catalysed reaction is a D-aminoacyl-tRNA + H2O = a tRNA + a D-alpha-amino acid + H(+). It catalyses the reaction glycyl-tRNA(Ala) + H2O = tRNA(Ala) + glycine + H(+). In terms of biological role, D-aminoacyl-tRNA deacylase with broad substrate specificity. By recycling D-aminoacyl-tRNA to D-amino acids and free tRNA molecules, this enzyme counteracts the toxicity associated with the formation of D-aminoacyl-tRNA entities in vivo. This chain is D-aminoacyl-tRNA deacylase, found in Hyperthermus butylicus (strain DSM 5456 / JCM 9403 / PLM1-5).